A 151-amino-acid chain; its full sequence is Superoxide dismutase [Cu-Zn] (151 aa).

A lipid anchor (S-palmitoyl cysteine) is attached at Cys-6. Cu cation is bound by residues His-45, His-47, and His-62. A disulfide bridge connects residues Cys-56 and Cys-144. 4 residues coordinate Zn(2+): His-62, His-70, His-79, and Asp-82. His-118 contributes to the Cu cation binding site.

The protein belongs to the Cu-Zn superoxide dismutase family. As to quaternary structure, homodimer. Cu cation serves as cofactor. It depends on Zn(2+) as a cofactor.

The protein resides in the cytoplasm. It localises to the nucleus. The enzyme catalyses 2 superoxide + 2 H(+) = H2O2 + O2. Functionally, destroys radicals which are normally produced within the cells and which are toxic to biological systems. This is Superoxide dismutase [Cu-Zn] (sod1) from Xenopus tropicalis (Western clawed frog).